A 396-amino-acid polypeptide reads, in one-letter code: Elongation factor Tu 1 (396 aa).

The tr-type G domain maps to 10-206 (KLHVNVGTIG…ALDTFIPDPT (197 aa)). The interval 19 to 26 (GHVDHGKT) is G1. 19 to 26 (GHVDHGKT) lines the GTP pocket. Thr-26 lines the Mg(2+) pocket. The G2 stretch occupies residues 60 to 64 (GITIS). The interval 81–84 (DCPG) is G3. GTP contacts are provided by residues 81 to 85 (DCPGH) and 136 to 139 (NKAD). Positions 136–139 (NKAD) are G4. Residues 174–176 (SAR) form a G5 region.

The protein belongs to the TRAFAC class translation factor GTPase superfamily. Classic translation factor GTPase family. EF-Tu/EF-1A subfamily. Monomer.

The protein localises to the cytoplasm. It catalyses the reaction GTP + H2O = GDP + phosphate + H(+). In terms of biological role, GTP hydrolase that promotes the GTP-dependent binding of aminoacyl-tRNA to the A-site of ribosomes during protein biosynthesis. The polypeptide is Elongation factor Tu 1 (Xanthomonas campestris pv. campestris (strain B100)).